A 357-amino-acid chain; its full sequence is Neurogenic differentiation factor 1 (357 aa).

The interval 1-94 (MTKSYSESGL…GPKKKKMTKA (94 aa)) is disordered. The span at 58–78 (EEEEEDEDLEEEEEEEEEEED) shows a compositional bias: acidic residues. A compositionally biased stretch (basic residues) spans 81–93 (PKRRGPKKKKMTK). Positions 87 to 93 (KKKKMTK) match the Nuclear localization signal motif. Residues 101 to 153 (LRRMKANARERNRMHGLNAALDNLRKVVPCYSKTQKLSKIETLRLAKNYIWAL) enclose the bHLH domain. Phosphoserine is present on residues serine 162, serine 259, serine 266, and serine 274. Position 336 is a phosphoserine; by CaMK2 (serine 336).

As to quaternary structure, efficient DNA-binding requires dimerization with another bHLH protein. Heterodimer with TCF3/E47; the heterodimer is inhibited in presence of ID2, but not NR0B2, to E-box element. Interacts with EP300; the interaction is inhibited by NR0B2. Interacts with RREB1. Interacts with ATOH8. In islet cells, phosphorylated on Ser-274 upon glucose stimulation; which may be required for nuclear localization. In activated neurons, phosphorylated on Ser-336; which promotes dendritic growth. Phosphorylated by MAPK1; phosphorylation regulates heterodimerization and DNA-binding activities. Phosphorylation on Ser-266 and Ser-274 increases transactivation on the insulin promoter in glucose-stimulated insulinoma cells. In terms of tissue distribution, expressed in pancreatic beta cells, pulmonary neuroendocrine cells and retinal interneurons amacrine cells (at protein level). Expressed in endocrine cells of the pancreas. Expressed in the inner layer of cerebellar external granular layer (EGL). Expressed in the Ammon's horn (AH), which includes the CA1-CA3 pyramidal layer and in granule cells of the dentate gyrus (DG). Expressed in photoreceptors of the outer nuclear layer (ONL), in a subset of cells in the lower half of the inner nuclear layer (INL), and in a subset of cells in the ganglion cell layer (GCL) of the retina. Expressed in cholinergic and AII amacrine cell types. Expressed in differentiating neurons of both the central and peripheral nervous systems.

It localises to the cytoplasm. The protein localises to the nucleus. Functionally, acts as a transcriptional activator: mediates transcriptional activation by binding to E box-containing promoter consensus core sequences 5'-CANNTG-3'. Associates with the p300/CBP transcription coactivator complex to stimulate transcription of the secretin gene as well as the gene encoding the cyclin-dependent kinase inhibitor CDKN1A. Contributes to the regulation of several cell differentiation pathways, like those that promote the formation of early retinal ganglion cells, inner ear sensory neurons, granule cells forming either the cerebellum or the dentate gyrus cell layer of the hippocampus, endocrine islet cells of the pancreas and enteroendocrine cells of the small intestine. Together with PAX6 or SIX3, is required for the regulation of amacrine cell fate specification. Also required for dendrite morphogenesis and maintenance in the cerebellar cortex. Associates with chromatin to enhancer regulatory elements in genes encoding key transcriptional regulators of neurogenesis. The polypeptide is Neurogenic differentiation factor 1 (Neurod1) (Mus musculus (Mouse)).